Reading from the N-terminus, the 321-residue chain is tRNA U34 carboxymethyltransferase (321 aa).

Residues Lys-90, Trp-104, Lys-109, Gly-129, 151–153 (DPT), 180–181 (IE), Met-195, Tyr-199, and Arg-314 each bind carboxy-S-adenosyl-L-methionine.

Belongs to the class I-like SAM-binding methyltransferase superfamily. CmoB family. As to quaternary structure, homotetramer.

It catalyses the reaction carboxy-S-adenosyl-L-methionine + 5-hydroxyuridine(34) in tRNA = 5-carboxymethoxyuridine(34) in tRNA + S-adenosyl-L-homocysteine + H(+). In terms of biological role, catalyzes carboxymethyl transfer from carboxy-S-adenosyl-L-methionine (Cx-SAM) to 5-hydroxyuridine (ho5U) to form 5-carboxymethoxyuridine (cmo5U) at position 34 in tRNAs. In Haemophilus influenzae (strain ATCC 51907 / DSM 11121 / KW20 / Rd), this protein is tRNA U34 carboxymethyltransferase.